We begin with the raw amino-acid sequence, 790 residues long: Ribonucleoside-diphosphate reductase large subunit (790 aa).

Residues Thr208, 223–224, Gly254, 436–440, and 621–625 each bind substrate; these read SC, NLCTE, and PTVSS. An intrachain disulfide couples Cys224 to Cys453. The active-site Proton acceptor is Asn436. The active-site Cysteine radical intermediate is the Cys438. Glu440 acts as the Proton acceptor in catalysis.

The protein belongs to the ribonucleoside diphosphate reductase large chain family. Heterotetramer composed of a homodimer of the large subunit (R1) and a homodimer of the small subunit (R2). Larger multisubunit protein complex are also active, composed of (R1)n(R2)n.

It carries out the reaction a 2'-deoxyribonucleoside 5'-diphosphate + [thioredoxin]-disulfide + H2O = a ribonucleoside 5'-diphosphate + [thioredoxin]-dithiol. Functionally, ribonucleoside-diphosphate reductase holoenzyme provides the precursors necessary for viral DNA synthesis. Allows virus growth in non-dividing cells, as well as reactivation from latency in infected hosts. Catalyzes the biosynthesis of deoxyribonucleotides from the corresponding ribonucleotides. This Equus caballus (Horse) protein is Ribonucleoside-diphosphate reductase large subunit.